The chain runs to 75 residues: Exodeoxyribonuclease 7 small subunit (75 aa).

The protein belongs to the XseB family. In terms of assembly, heterooligomer composed of large and small subunits.

Its subcellular location is the cytoplasm. The catalysed reaction is Exonucleolytic cleavage in either 5'- to 3'- or 3'- to 5'-direction to yield nucleoside 5'-phosphates.. Its function is as follows. Bidirectionally degrades single-stranded DNA into large acid-insoluble oligonucleotides, which are then degraded further into small acid-soluble oligonucleotides. The sequence is that of Exodeoxyribonuclease 7 small subunit from Caldanaerobacter subterraneus subsp. tengcongensis (strain DSM 15242 / JCM 11007 / NBRC 100824 / MB4) (Thermoanaerobacter tengcongensis).